We begin with the raw amino-acid sequence, 760 residues long: UDP-N-acetylmuramoyl-L-alanyl-D-glutamate--2,6-diaminopimelate ligase MurE homolog, chloroplastic (760 aa).

The N-terminal 59 residues, 1–59 (MATAPLAFRLPFPFSFPSASRPPPSRILAPPTPRRLPLRLAAAAARRFRPPTADDEPPE), are a transit peptide targeting the chloroplast. Disordered regions lie at residues 13–159 (PFSF…TDEL) and 176–205 (LSVVSVADEEDEEVEGGEDEDDGLPLDEDG). The segment covering 20–34 (SRPPPSRILAPPTPR) has biased composition (pro residues). Acidic residues predominate over residues 53-62 (ADDEPPEAAE). Residues 118-132 (EIDRAIAEKREEFTR) show a composition bias toward basic and acidic residues. Acidic residues-rich tracts occupy residues 150 to 159 (PEDEDLTDEL) and 182 to 205 (ADEEDEEVEGGEDEDDGLPLDEDG).

This sequence belongs to the MurCDEF family. MurE subfamily. As to quaternary structure, component of the plastid-encoded plastid RNA polymerase (PEP) complex.

Its subcellular location is the plastid. It is found in the chloroplast. Required for the activity of the plastid-encoded RNA polymerase (PEP) and full expression of genes transcribed by PEP. Required for the proper build-up and formation of the PEP-complex. The polypeptide is UDP-N-acetylmuramoyl-L-alanyl-D-glutamate--2,6-diaminopimelate ligase MurE homolog, chloroplastic (Zea mays (Maize)).